We begin with the raw amino-acid sequence, 688 residues long: Protein sel-1 homolog 2 (688 aa).

An N-terminal signal peptide occupies residues 1 to 23 (MKPLSLLIEILIILGVTIKTIKA). At 24-662 (EEHNKRQKER…RWNWLKLDNT (639 aa)) the chain is on the extracellular side. The N-linked (GlcNAc...) asparagine glycan is linked to Asn34. 11 Sel1-like repeats span residues 107–142 (GDQL…DMGN), 143–178 (LKAM…KEGS), 179–214 (CKAQ…AGGN), 215–250 (MMSQ…DYIA), 297–333 (VQIQ…KAGS), 334–370 (ANAM…SKGN), 371–406 (AIGL…EKGW), 407–442 (PDAQ…QSGQ), 443–478 (PLAI…ELGH), 551–586 (AFAR…NKYH), and 588–623 (AQAM…QTSP). Residues 663-683 (IGPHWDLFVIGLIVPGLILLL) form a helical membrane-spanning segment. Over 684–688 (RNHHG) the chain is Cytoplasmic.

Belongs to the sel-1 family.

It localises to the membrane. Its subcellular location is the cell projection. The protein localises to the cilium. The protein resides in the nucleus speckle. The chain is Protein sel-1 homolog 2 (SEL1L2) from Homo sapiens (Human).